The chain runs to 139 residues: Large ribosomal subunit protein bL17 (139 aa).

Residues 117-139 (DRDPEAKGQDSGPVEIKDESEEG) are disordered.

It belongs to the bacterial ribosomal protein bL17 family. As to quaternary structure, part of the 50S ribosomal subunit. Contacts protein L32.

In Rhodospirillum centenum (strain ATCC 51521 / SW), this protein is Large ribosomal subunit protein bL17.